Consider the following 61-residue polypeptide: Inner membrane protein p12 (61 aa).

Residues 16–36 (LLIVAIIVVIMAIMLYYFWWM) form a helical membrane-spanning segment.

Belongs to the asfivirus inner membrane protein p12 family. In terms of assembly, homomultimer; disulfide-linked. Not glycosylated.

Its subcellular location is the virion membrane. The sequence is that of Inner membrane protein p12 from Ornithodoros (relapsing fever ticks).